A 619-amino-acid polypeptide reads, in one-letter code: Magnesium-chelatase 67 kDa subunit (619 aa).

An ATP-binding site is contributed by 33–40; that stretch reads STVGSGKS. Residues 273 to 321 are disordered; it reads TRMPEREPSEEEMQQEEPPPPEEQPEQEGEDENAPPDETDSDADEEQEE. Positions 280–321 are enriched in acidic residues; the sequence is PSEEEMQQEEPPPPEEQPEQEGEDENAPPDETDSDADEEQEE. Residues 431 to 619 enclose the VWFA domain; the sequence is LFIFMVDASG…AEQIVEAALS (189 aa).

This sequence belongs to the Mg-chelatase subunits D/I family.

It catalyses the reaction protoporphyrin IX + Mg(2+) + ATP + H2O = Mg-protoporphyrin IX + ADP + phosphate + 3 H(+). It participates in porphyrin-containing compound metabolism; bacteriochlorophyll biosynthesis. Its function is as follows. Involved in bacteriochlorophyll biosynthesis; introduces a magnesium ion into protoporphyrin IX to yield Mg-protoporphyrin IX. The polypeptide is Magnesium-chelatase 67 kDa subunit (bchD) (Chlorobaculum parvum (strain DSM 263 / NCIMB 8327) (Chlorobium vibrioforme subsp. thiosulfatophilum)).